The sequence spans 836 residues: Probable RING finger protein 207 homolog (836 aa).

The RING-type zinc finger occupies 8–42 (CTICKNDFEEPILFSCQHTTCRKCSNGSPSCKTCS). Residues 68 to 115 (EEMEQCANCEQITLPMFYCETCQQSLCLACRNVTHQARMFSSHKIISS) form a B box-type 1; atypical zinc finger. Zn(2+) contacts are provided by Cys-73, Cys-76, Cys-97, and His-102. A B box-type 2; degenerate zinc finger spans residues 122–164 (YSSSLCKDHNEPYILYCSDVRKLVCIQCFNGRPLEERHSFISI). Residues 527 to 557 (QNRIMAIEKEEENRRLNQEAKKKEELAGQSA) are a coiled coil. The span at 540–552 (RRLNQEAKKKEEL) shows a compositional bias: basic and acidic residues. Residues 540 to 571 (RRLNQEAKKKEELAGQSAAMKSLKHGKTKRKE) are disordered. The span at 561–571 (SLKHGKTKRKE) shows a compositional bias: basic residues.

This Caenorhabditis briggsae protein is Probable RING finger protein 207 homolog.